Here is a 160-residue protein sequence, read N- to C-terminus: Prorelaxin (160 aa).

3 disulfide bridges follow: C10/C147, C22/C160, and C146/C151. A propeptide spans 34 to 133 (QEKQRILGSG…KDFNLNIYSP (100 aa)) (connecting peptide).

This sequence belongs to the insulin family. Heterodimer of a B chain and an A chain linked by two disulfide bonds. In terms of tissue distribution, expressed in the endometrium during pregnancy and in mammary gland during lactation.

The protein resides in the secreted. Relaxin is an ovarian hormone that acts with estrogen to produce dilatation of the birth canal in many mammals. It bears mature young, and allows separation of the pelvic bones. The sequence is that of Prorelaxin (RLN) from Cavia porcellus (Guinea pig).